Consider the following 567-residue polypeptide: 2-succinyl-5-enolpyruvyl-6-hydroxy-3-cyclohexene-1-carboxylate synthase (567 aa).

Belongs to the TPP enzyme family. MenD subfamily. As to quaternary structure, homodimer. Mg(2+) is required as a cofactor. The cofactor is Mn(2+). Thiamine diphosphate serves as cofactor.

The catalysed reaction is isochorismate + 2-oxoglutarate + H(+) = 5-enolpyruvoyl-6-hydroxy-2-succinyl-cyclohex-3-ene-1-carboxylate + CO2. Its pathway is quinol/quinone metabolism; 1,4-dihydroxy-2-naphthoate biosynthesis; 1,4-dihydroxy-2-naphthoate from chorismate: step 2/7. The protein operates within quinol/quinone metabolism; menaquinone biosynthesis. Functionally, catalyzes the thiamine diphosphate-dependent decarboxylation of 2-oxoglutarate and the subsequent addition of the resulting succinic semialdehyde-thiamine pyrophosphate anion to isochorismate to yield 2-succinyl-5-enolpyruvyl-6-hydroxy-3-cyclohexene-1-carboxylate (SEPHCHC). This is 2-succinyl-5-enolpyruvyl-6-hydroxy-3-cyclohexene-1-carboxylate synthase from Yersinia pseudotuberculosis serotype IB (strain PB1/+).